Here is a 307-residue protein sequence, read N- to C-terminus: Probable RuBisCO transcriptional regulator (307 aa).

The 58-residue stretch at Phe-5–Thr-62 folds into the HTH lysR-type domain. Positions Phe-22–Lys-41 form a DNA-binding region, H-T-H motif.

It belongs to the LysR transcriptional regulatory family.

It is found in the plastid. The protein localises to the chloroplast. In terms of biological role, trans-acting transcriptional regulator of RuBisCO genes (rbcL and rbcS) expression. The sequence is that of Probable RuBisCO transcriptional regulator (rbcR-A) from Thalassiosira pseudonana (Marine diatom).